A 317-amino-acid polypeptide reads, in one-letter code: Peptidyl-prolyl cis-trans isomerase CYP26-2, chloroplastic (317 aa).

A disordered region spans residues 1–37; that stretch reads MMQPNAKLLSPSAKFLPSPIEPPQHNRRTTVGAPPSL. The PPIase cyclophilin-type domain maps to 95–311; sequence FIDVSIDGEP…SKVVVTNCGL (217 aa).

The protein belongs to the cyclophilin-type PPIase family. As to expression, ubiquitous. Lower levels of expression in roots.

Its subcellular location is the plastid. The protein localises to the chloroplast thylakoid. It catalyses the reaction [protein]-peptidylproline (omega=180) = [protein]-peptidylproline (omega=0). PPIases accelerate the folding of proteins. It catalyzes the cis-trans isomerization of proline imidic peptide bonds in oligopeptides. In Arabidopsis thaliana (Mouse-ear cress), this protein is Peptidyl-prolyl cis-trans isomerase CYP26-2, chloroplastic (CYP26-2).